Reading from the N-terminus, the 222-residue chain is Eukaryotic translation initiation factor 3 subunit K (222 aa).

Positions tyrosine 46–lysine 208 constitute a PCI domain.

The protein belongs to the eIF-3 subunit K family. As to quaternary structure, component of the eukaryotic translation initiation factor 3 (eIF-3) complex. The eIF-3 complex interacts with pix.

It is found in the cytoplasm. Its function is as follows. Component of the eukaryotic translation initiation factor 3 (eIF-3) complex, which is involved in protein synthesis of a specialized repertoire of mRNAs and, together with other initiation factors, stimulates binding of mRNA and methionyl-tRNAi to the 40S ribosome. The eIF-3 complex specifically targets and initiates translation of a subset of mRNAs involved in cell proliferation. The sequence is that of Eukaryotic translation initiation factor 3 subunit K from Drosophila sechellia (Fruit fly).